The chain runs to 308 residues: MQIYPLRLLPNKIDFDFMNFKKVSYTFSIILSLISFIWIGIYKFNFGIDFAGGIVIEVRLDQAPDLPKMRGVLGKLGIGEVVLQNFGSERDLSIRFGSSSEENLMKNIELIKGFLQSNFPYKFEYRKVDFVGPQVGRQLIEAGAMAMLFSFLAIMVYIWVRFEWYFGLGILIALVHDVILALGFMSMTKLDFNLSTIAAVLTIIGYSVNDSVVIYDRIRENLRKYHKKNITEIINLSINETLSRTILTVITTLLANLALILFGGEAIRSFSVLVFFGIIAGTYSSIFISAPILTMFVNRKFNKKVIER.

The next 6 membrane-spanning stretches (helical) occupy residues 28 to 48, 140 to 160, 164 to 184, 194 to 214, 246 to 266, and 272 to 292; these read SIIL…NFGI, IEAG…YIWV, WYFG…ALGF, LSTI…SVVI, ILTV…GGEA, and VLVF…SAPI.

This sequence belongs to the SecD/SecF family. SecF subfamily. Forms a complex with SecD. Part of the essential Sec protein translocation apparatus which comprises SecA, SecYEG and auxiliary proteins SecDF-YajC and YidC.

It is found in the cell inner membrane. In terms of biological role, part of the Sec protein translocase complex. Interacts with the SecYEG preprotein conducting channel. SecDF uses the proton motive force (PMF) to complete protein translocation after the ATP-dependent function of SecA. The chain is Protein translocase subunit SecF from Rickettsia conorii (strain ATCC VR-613 / Malish 7).